The following is a 359-amino-acid chain: Alanine racemase, biosynthetic (359 aa).

Residue Lys34 is the Proton acceptor; specific for D-alanine of the active site. Lys34 is modified (N6-(pyridoxal phosphate)lysine). Arg129 is a substrate binding site. The active-site Proton acceptor; specific for L-alanine is the Tyr255. Position 303 (Met303) interacts with substrate.

It belongs to the alanine racemase family. Pyridoxal 5'-phosphate serves as cofactor.

It catalyses the reaction L-alanine = D-alanine. It participates in amino-acid biosynthesis; D-alanine biosynthesis; D-alanine from L-alanine: step 1/1. It functions in the pathway cell wall biogenesis; peptidoglycan biosynthesis. In terms of biological role, catalyzes the interconversion of L-alanine and D-alanine. Provides the D-alanine required for cell wall biosynthesis. The chain is Alanine racemase, biosynthetic (alr) from Escherichia coli O157:H7.